The following is a 511-amino-acid chain: Peptide transporter YePEPT (511 aa).

The Cytoplasmic segment spans residues Met-1–Pro-19. Residues Leu-20–Met-45 traverse the membrane as a helical segment. Residues Ala-46–Glu-59 are Periplasmic-facing. Residues Gln-60–Asp-84 form a helical membrane-spanning segment. Residues Asn-85–Gly-88 lie on the Cytoplasmic side of the membrane. Residues Gln-89–Leu-109 traverse the membrane as a helical segment. At Ser-110 to Asn-115 the chain is on the periplasmic side. The chain crosses the membrane as a helical span at residues Asp-116 to Val-138. The Cytoplasmic portion of the chain corresponds to Met-139–Ala-149. The helical transmembrane segment at Arg-150–Trp-175 threads the bilayer. Topologically, residues Leu-176–Gly-181 are periplasmic. The chain crosses the membrane as a helical span at residues Trp-182–Met-208. Over Lys-209 to Gly-232 the chain is Cytoplasmic. The helical transmembrane segment at Arg-233–Val-253 threads the bilayer. The Periplasmic portion of the chain corresponds to Ile-254 to Ile-256. A helical membrane pass occupies residues Asn-257–Tyr-279. At Leu-280–Leu-294 the chain is on the cytoplasmic side. A helical membrane pass occupies residues Leu-295–Phe-321. Topologically, residues Ala-322–Ile-335 are periplasmic. The chain crosses the membrane as a helical span at residues Pro-336–Trp-357. The Cytoplasmic segment spans residues Ala-358 to Pro-369. A helical membrane pass occupies residues Ser-370–Val-396. Residues Leu-397 to Ser-405 are Periplasmic-facing. Residues Pro-406–Ile-426 form a helical membrane-spanning segment. Residues Gly-427–Gly-441 lie on the Cytoplasmic side of the membrane. The helical transmembrane segment at Gln-442–Gly-462 threads the bilayer. Residues Gly-463–Asp-471 are Periplasmic-facing. A helical membrane pass occupies residues Met-472–Val-496. Topologically, residues Pro-497–Ala-511 are cytoplasmic.

This sequence belongs to the major facilitator superfamily. Proton-dependent oligopeptide transporter (POT/PTR) (TC 2.A.17) family.

The protein resides in the cell inner membrane. Transport is inhibited by the proton ionophore carbonyl cyanide m-chlorophenylhydrazone (CCCP). Functionally, mediates the proton-dependent uptake of dipeptides. Shows higher affinity for dipeptides with a negatively charged amino acid residue at the N-terminal position, such as Asp-Ala and Glu-Ala. Also displays specificity for Ala-Ala, Ala-Tyr and Tyr-Ala. The sequence is that of Peptide transporter YePEPT from Yersinia enterocolitica subsp. palearctica serotype O:3 (strain YE-P4).